Here is an 89-residue protein sequence, read N- to C-terminus: Small ribosomal subunit protein uS15 (89 aa).

The protein belongs to the universal ribosomal protein uS15 family. Part of the 30S ribosomal subunit. Forms a bridge to the 50S subunit in the 70S ribosome, contacting the 23S rRNA.

Its function is as follows. One of the primary rRNA binding proteins, it binds directly to 16S rRNA where it helps nucleate assembly of the platform of the 30S subunit by binding and bridging several RNA helices of the 16S rRNA. In terms of biological role, forms an intersubunit bridge (bridge B4) with the 23S rRNA of the 50S subunit in the ribosome. This chain is Small ribosomal subunit protein uS15, found in Dictyoglomus turgidum (strain DSM 6724 / Z-1310).